The chain runs to 433 residues: MKALTELFSKLVEKIRDVEYIDEATLQEIAREIQRTLLKADVPLDLVKTFTDNAVKRIREEKPPAGIPPREYLIYVLYEELVKLMGGEQPAEFKPTKKPYIVLLLGVEGSGKTTTSAKLARYLMKRGYKVGMVETDTIRPAAFDQLRQLAEKIGAPFYGERDGKDAVEIARRGVANLKGVDVLIIDTAGRHRNEEALLQEVKAIYDAVNPDEVVLVVDATVGKLAAAQAEAFMKYLPIHTVIITKMDSTARGGGALAAVAKTGARVKFIGVGEDVEELEPFNPRKFVARLLGMGDLDALLEKIKAVFEEEEVLEEIESGRLDLLTFKKQIDSLMKLGPLSKVFQLLPGGLAAKISEEQIELSQKNLKKWRAILSSMTMEELKNPDILNASRIRRIALGAGVTPKDVKEMLTVYENLKKMSKTLKRQMRLRMAR.

Residues 106–113 (GVEGSGKT), 186–190 (DTAGR), and 244–247 (TKMD) each bind GTP.

This sequence belongs to the GTP-binding SRP family. SRP54 subfamily. In terms of assembly, part of the signal recognition particle protein translocation system, which is composed of SRP and FtsY. Archaeal SRP consists of a 7S RNA molecule of 300 nucleotides and two protein subunits: SRP54 and SRP19.

The protein localises to the cytoplasm. It carries out the reaction GTP + H2O = GDP + phosphate + H(+). Functionally, involved in targeting and insertion of nascent membrane proteins into the cytoplasmic membrane. Binds to the hydrophobic signal sequence of the ribosome-nascent chain (RNC) as it emerges from the ribosomes. The SRP-RNC complex is then targeted to the cytoplasmic membrane where it interacts with the SRP receptor FtsY. The sequence is that of Signal recognition particle 54 kDa protein from Pyrobaculum arsenaticum (strain DSM 13514 / JCM 11321 / PZ6).